The primary structure comprises 253 residues: MKVIITVNYEEMSKKAAEIVKKQIKEKPNTVLGLATGSTPLGMYKHLIEMYKRGEIDFSNVITFNLDEYIGLSPDHPQSYHYFMFHNFFNHINIKKENVHIPNGIAEDLEEECRKYEEEIEKAGGIDLQILGIGINGHIGFNEPDESIETKTHVVTLTEKTINANKRFFKSAEEVPRKAITMGLGSIMKAKKIVLLASGKNKAEAIKETIKGQLTTKVPATVLALHPDVTIIIDKEAASLIPDEDLKEIEVIV.

The Proton acceptor; for enolization step role is filled by Asp67. Asn136 functions as the For ring-opening step in the catalytic mechanism. Residue His138 is the Proton acceptor; for ring-opening step of the active site. Catalysis depends on Glu143, which acts as the For ring-opening step.

Belongs to the glucosamine/galactosamine-6-phosphate isomerase family. NagB subfamily.

It catalyses the reaction alpha-D-glucosamine 6-phosphate + H2O = beta-D-fructose 6-phosphate + NH4(+). It participates in amino-sugar metabolism; N-acetylneuraminate degradation; D-fructose 6-phosphate from N-acetylneuraminate: step 5/5. In terms of biological role, catalyzes the reversible isomerization-deamination of glucosamine 6-phosphate (GlcN6P) to form fructose 6-phosphate (Fru6P) and ammonium ion. This Thermoanaerobacter pseudethanolicus (strain ATCC 33223 / 39E) (Clostridium thermohydrosulfuricum) protein is Glucosamine-6-phosphate deaminase.